The sequence spans 132 residues: L-ectoine synthase (132 aa).

This sequence belongs to the ectoine synthase family.

The catalysed reaction is (2S)-4-acetamido-2-aminobutanoate = L-ectoine + H2O. It participates in amine and polyamine biosynthesis; ectoine biosynthesis; L-ectoine from L-aspartate 4-semialdehyde: step 3/3. Functionally, catalyzes the circularization of gamma-N-acetyl-alpha,gamma-diaminobutyric acid (ADABA) to ectoine (1,4,5,6-tetrahydro-2-methyl-4-pyrimidine carboxylic acid), which is an excellent osmoprotectant. This chain is L-ectoine synthase, found in Alkalilimnicola ehrlichii (strain ATCC BAA-1101 / DSM 17681 / MLHE-1).